The sequence spans 262 residues: Transmembrane and immunoglobulin domain-containing protein 1 (262 aa).

The N-terminal stretch at 1–29 (MAWKSSVIMQMGRFLLLVILFLPREMTSS) is a signal peptide. Residues 30 to 114 (VLTVNGKTEN…LGRDQSVSVS (85 aa)) enclose the Ig-like C2-type 1 domain. At 30-220 (VLTVNGKTEN…IVKDKTVGVP (191 aa)) the chain is on the extracellular side. An intrachain disulfide couples cysteine 54 to cysteine 103. Asparagine 58, asparagine 83, asparagine 118, asparagine 158, and asparagine 190 each carry an N-linked (GlcNAc...) asparagine glycan. The region spanning 122–207 (PPLLSGNDFQ…KSSLKTESLD (86 aa)) is the Ig-like C2-type 2 domain. Cysteine 143 and cysteine 195 are disulfide-bonded. The helical transmembrane segment at 221-241 (IEPIIAACVVIFLTLCFGLIA) threads the bilayer. At 242–262 (RRKKIMKLCMKDKDPHSETAL) the chain is on the cytoplasmic side.

Homodimer. N-glycosylated.

The protein resides in the cell membrane. It localises to the cytoplasm. Functionally, may control cell-cell adhesion, cell migration and proliferation, cell morphology, and protects renal epithelial cells from oxidative cell injury to promote cell survival. The sequence is that of Transmembrane and immunoglobulin domain-containing protein 1 from Homo sapiens (Human).